Reading from the N-terminus, the 473-residue chain is tRNA-2-methylthio-N(6)-dimethylallyladenosine synthase (473 aa).

The MTTase N-terminal domain occupies 5–125; that stretch reads RKLHIKSFGC…LPQLLAEAAR (121 aa). Residues cysteine 14, cysteine 50, cysteine 88, cysteine 166, cysteine 170, and cysteine 173 each coordinate [4Fe-4S] cluster. The Radical SAM core domain maps to 152–384; sequence RARGISAFVT…QELIDSQQAA (233 aa). The region spanning 387–449 is the TRAM domain; it reads AAVIGTTVEV…RYSLIGELAA (63 aa). Residues 452 to 473 form a disordered region; that stretch reads QHSGFATRSEDSPQSLPITTGA.

The protein belongs to the methylthiotransferase family. MiaB subfamily. Monomer. [4Fe-4S] cluster is required as a cofactor.

The protein localises to the cytoplasm. The catalysed reaction is N(6)-dimethylallyladenosine(37) in tRNA + (sulfur carrier)-SH + AH2 + 2 S-adenosyl-L-methionine = 2-methylsulfanyl-N(6)-dimethylallyladenosine(37) in tRNA + (sulfur carrier)-H + 5'-deoxyadenosine + L-methionine + A + S-adenosyl-L-homocysteine + 2 H(+). Catalyzes the methylthiolation of N6-(dimethylallyl)adenosine (i(6)A), leading to the formation of 2-methylthio-N6-(dimethylallyl)adenosine (ms(2)i(6)A) at position 37 in tRNAs that read codons beginning with uridine. In Rhodopseudomonas palustris (strain BisB18), this protein is tRNA-2-methylthio-N(6)-dimethylallyladenosine synthase.